We begin with the raw amino-acid sequence, 422 residues long: Keratan-sulfate endo-1,4-beta-galactosidase (422 aa).

The N-terminal stretch at 1–46 is a signal peptide; the sequence is MRKTKFWLVLSLIATSLSIFACKKDSTATKNPIPEVSKAKASTKLL. Positions 47-292 constitute a GH16 domain; sequence NATTVATTDY…YVRVYKLPLF (246 aa). Glu171 acts as the Nucleophile in catalysis. Glu176 functions as the Proton donor in the catalytic mechanism. The CBM-cenC domain occupies 291–406; sequence LFSNGDFESG…NTTATVYFYK (116 aa).

The protein belongs to the glycosyl hydrolase 16 family.

The protein localises to the secreted. The catalysed reaction is Endohydrolysis of (1-&gt;4)-beta-D-galactosidic linkages in keratan sulfate.. Hydrolyzes internal endo-beta-galactosyl linkages in keratan sulfate and in various neolacto-type glycosphingolipids, producing sulfated and non-sulfated disaccharides, and glucosylceramides respectivly. The sequence is that of Keratan-sulfate endo-1,4-beta-galactosidase from Sphingobacterium multivorum.